Consider the following 208-residue polypeptide: Uracil phosphoribosyltransferase (208 aa).

Residues R78, R103, and 130-138 (DPMLATGGS) each bind 5-phospho-alpha-D-ribose 1-diphosphate. Residues I193 and 198–200 (GDA) contribute to the uracil site. 5-phospho-alpha-D-ribose 1-diphosphate is bound at residue D199.

Belongs to the UPRTase family. Requires Mg(2+) as cofactor.

The catalysed reaction is UMP + diphosphate = 5-phospho-alpha-D-ribose 1-diphosphate + uracil. Its pathway is pyrimidine metabolism; UMP biosynthesis via salvage pathway; UMP from uracil: step 1/1. Its activity is regulated as follows. Allosterically activated by GTP. In terms of biological role, catalyzes the conversion of uracil and 5-phospho-alpha-D-ribose 1-diphosphate (PRPP) to UMP and diphosphate. The protein is Uracil phosphoribosyltransferase of Thermus thermophilus (strain ATCC 27634 / DSM 579 / HB8).